Consider the following 84-residue polypeptide: Small ribosomal subunit protein uS17 (84 aa).

The protein belongs to the universal ribosomal protein uS17 family. As to quaternary structure, part of the 30S ribosomal subunit.

In terms of biological role, one of the primary rRNA binding proteins, it binds specifically to the 5'-end of 16S ribosomal RNA. The chain is Small ribosomal subunit protein uS17 from Porphyromonas gingivalis (strain ATCC 33277 / DSM 20709 / CIP 103683 / JCM 12257 / NCTC 11834 / 2561).